Here is a 79-residue protein sequence, read N- to C-terminus: Small ribosomal subunit protein uS17 (79 aa).

It belongs to the universal ribosomal protein uS17 family. In terms of assembly, part of the 30S ribosomal subunit.

In terms of biological role, one of the primary rRNA binding proteins, it binds specifically to the 5'-end of 16S ribosomal RNA. The chain is Small ribosomal subunit protein uS17 from Rhizobium leguminosarum bv. trifolii (strain WSM2304).